Reading from the N-terminus, the 282-residue chain is Cell division protein DivIB (282 aa).

Topologically, residues 1–59 are cytoplasmic; the sequence is MLDDRSAIEHHKYSQRLTELERRSAAAQQRQQKKKPPKMHVGNKIRGIKIKRYVSNGER. Residues 19 to 41 are disordered; the sequence is ELERRSAAAQQRQQKKKPPKMHV. The segment covering 31–41 has biased composition (basic residues); the sequence is QQKKKPPKMHV. The helical transmembrane segment at 60-80 threads the bilayer; that stretch reads VLKLVVLFSAILLFMLYIISP. Residues 81 to 282 are Extracellular-facing; that stretch reads LSKITTLHVT…YSYDYGSKDK (202 aa). A POTRA domain is found at 82–153; sequence SKITTLHVTG…QSLQISVKEN (72 aa).

It belongs to the FtsQ/DivIB family. DivIB subfamily.

Its subcellular location is the cell membrane. Functionally, cell division protein that may be involved in stabilizing or promoting the assembly of the division complex. This Limosilactobacillus reuteri (strain ATCC 55730 / SD2112) (Lactobacillus reuteri) protein is Cell division protein DivIB.